The sequence spans 419 residues: L-rhamnose isomerase (419 aa).

Residues histidine 262, aspartate 294, and aspartate 296 each contribute to the Mn(2+) site.

It belongs to the rhamnose isomerase family. As to quaternary structure, homotetramer. Mn(2+) serves as cofactor.

The protein resides in the cytoplasm. The catalysed reaction is L-rhamnopyranose = L-rhamnulose. It functions in the pathway carbohydrate degradation; L-rhamnose degradation; glycerone phosphate from L-rhamnose: step 1/3. Its function is as follows. Catalyzes the interconversion of L-rhamnose and L-rhamnulose. The chain is L-rhamnose isomerase from Salmonella agona (strain SL483).